Here is a 344-residue protein sequence, read N- to C-terminus: Protein Tob2 (344 aa).

Disordered regions lie at residues 144 to 169 (GSQD…FIPR) and 191 to 225 (MKKG…SPTN). The segment covering 145 to 164 (SQDSSLSNSPSPSFGQSPSP) has biased composition (low complexity). Positions 194–210 (GGGAASGGGVASSGAGG) are enriched in gly residues. A compositionally biased stretch (low complexity) spans 211 to 225 (QQPPQQPRMARSPTN). Phosphoserine is present on serine 254.

Belongs to the BTG family. As to quaternary structure, associates with CAF1. As to expression, ubiquitous.

The protein resides in the cytoplasm. Its function is as follows. Anti-proliferative protein inhibits cell cycle progression from the G0/G1 to S phases. This Homo sapiens (Human) protein is Protein Tob2 (TOB2).